The following is a 433-amino-acid chain: Putative tartrate transporter (433 aa).

Helical transmembrane passes span 17-37, 47-67, 82-102, 113-133, 139-159, 177-197, 242-262, 275-295, 314-334, 350-370, and 395-415; these read IVPF…NIGF, GFSS…YFLF, IWIA…AFVQ, LLGV…SFWF, AAVT…GSPI, WMFL…LFYL, VIAL…LGIW, LQVG…MVLW, LLAA…TVLI, LWSM…IATI, and FAGG…VTLV.

It belongs to the major facilitator superfamily. Phthalate permease family.

It localises to the cell membrane. In terms of biological role, component of the tartrate utilization system and may allow entry of tartrate and tartrate dehydrogenase. The polypeptide is Putative tartrate transporter (ttuB) (Agrobacterium vitis (Rhizobium vitis)).